The chain runs to 248 residues: NAD(P)H-quinone oxidoreductase subunit K 1 (248 aa).

Positions Met-1–Ser-2 are excised as a propeptide. Cys-62, Cys-63, Cys-127, and Cys-158 together coordinate [4Fe-4S] cluster. The segment at Met-228–Gly-248 is disordered. The segment covering Leu-236–Gly-248 has biased composition (polar residues).

It belongs to the complex I 20 kDa subunit family. NDH-1 can be composed of about 15 different subunits; different subcomplexes with different compositions have been identified which probably have different functions. [4Fe-4S] cluster serves as cofactor.

The protein localises to the cellular thylakoid membrane. It carries out the reaction a plastoquinone + NADH + (n+1) H(+)(in) = a plastoquinol + NAD(+) + n H(+)(out). It catalyses the reaction a plastoquinone + NADPH + (n+1) H(+)(in) = a plastoquinol + NADP(+) + n H(+)(out). NDH-1 shuttles electrons from an unknown electron donor, via FMN and iron-sulfur (Fe-S) centers, to quinones in the respiratory and/or the photosynthetic chain. The immediate electron acceptor for the enzyme in this species is believed to be plastoquinone. Couples the redox reaction to proton translocation, and thus conserves the redox energy in a proton gradient. Cyanobacterial NDH-1 also plays a role in inorganic carbon-concentration. This chain is NAD(P)H-quinone oxidoreductase subunit K 1, found in Synechocystis sp. (strain ATCC 27184 / PCC 6803 / Kazusa).